A 315-amino-acid polypeptide reads, in one-letter code: 2,3-dihydroxyphenylpropionate/2,3-dihydroxicinnamic acid 1,2-dioxygenase (315 aa).

Residue H118 is the Proton donor of the active site. The active-site Proton acceptor is H182.

It belongs to the LigB/MhpB extradiol dioxygenase family. As to quaternary structure, homotetramer. The cofactor is Fe(2+).

It carries out the reaction 3-(2,3-dihydroxyphenyl)propanoate + O2 = (2Z,4E)-2-hydroxy-6-oxonona-2,4-dienedioate + H(+). It catalyses the reaction (2E)-3-(2,3-dihydroxyphenyl)prop-2-enoate + O2 = (2Z,4E,7E)-2-hydroxy-6-oxonona-2,4,7-trienedioate + H(+). The protein operates within aromatic compound metabolism; 3-phenylpropanoate degradation. In terms of biological role, catalyzes the non-heme iron(II)-dependent oxidative cleavage of 2,3-dihydroxyphenylpropionic acid and 2,3-dihydroxicinnamic acid into 2-hydroxy-6-ketononadienedioate and 2-hydroxy-6-ketononatrienedioate, respectively. The protein is 2,3-dihydroxyphenylpropionate/2,3-dihydroxicinnamic acid 1,2-dioxygenase of Mycolicibacterium gilvum (strain PYR-GCK) (Mycobacterium gilvum (strain PYR-GCK)).